The following is a 113-amino-acid chain: Ribonuclease P protein component (113 aa).

It belongs to the RnpA family. Consists of a catalytic RNA component (M1 or rnpB) and a protein subunit.

It carries out the reaction Endonucleolytic cleavage of RNA, removing 5'-extranucleotides from tRNA precursor.. In terms of biological role, RNaseP catalyzes the removal of the 5'-leader sequence from pre-tRNA to produce the mature 5'-terminus. It can also cleave other RNA substrates such as 4.5S RNA. The protein component plays an auxiliary but essential role in vivo by binding to the 5'-leader sequence and broadening the substrate specificity of the ribozyme. In Ureaplasma parvum serovar 3 (strain ATCC 27815 / 27 / NCTC 11736), this protein is Ribonuclease P protein component.